The following is a 192-amino-acid chain: Elongation factor P (192 aa).

This sequence belongs to the elongation factor P family.

It is found in the cytoplasm. Its pathway is protein biosynthesis; polypeptide chain elongation. Its function is as follows. Involved in peptide bond synthesis. Stimulates efficient translation and peptide-bond synthesis on native or reconstituted 70S ribosomes in vitro. Probably functions indirectly by altering the affinity of the ribosome for aminoacyl-tRNA, thus increasing their reactivity as acceptors for peptidyl transferase. This is Elongation factor P from Borrelia recurrentis (strain A1).